The primary structure comprises 254 residues: uncharacterized protein (254 aa).

A signal peptide spans 1-22; that stretch reads MKRLKKIVLCISFLFLTIFIGG. A lipid anchor (N-palmitoyl cysteine) is attached at Cys-23. Cys-23 carries the S-diacylglycerol cysteine lipid modification.

The protein belongs to the staphylococcal tandem lipoprotein family.

The protein resides in the cell membrane. This is an uncharacterized protein from Staphylococcus aureus (strain MSSA476).